A 482-amino-acid chain; its full sequence is Putative ankyrin repeat protein FPV232 (482 aa).

9 ANK repeats span residues 36-65 (IPLI…NVNE), 69-100 (RYLT…DLSS), 101-128 (YEER…DGNR), 129-161 (TIDD…DTKI), 166-195 (KLKT…EVNS), 199-228 (GNNS…NTDH), 232-265 (CGTT…SVNI), 270-297 (LGFT…DPNI), and 301-332 (EKET…LRAF).

This chain is Putative ankyrin repeat protein FPV232, found in Fowlpox virus (strain NVSL) (FPV).